Consider the following 252-residue polypeptide: Bidirectional sugar transporter SWEET3b (252 aa).

At Met1–Val8 the chain is on the extracellular side. The helical transmembrane segment at Ala9 to Phe29 threads the bilayer. Residues Val10–Glu98 form the MtN3/slv 1 domain. At Arg30 to Cys43 the chain is on the cytoplasmic side. Residues Val44–Val64 traverse the membrane as a helical segment. Topologically, residues Ser65–Ser75 are extracellular. N-linked (GlcNAc...) asparagine glycosylation is present at Asn70. A helical transmembrane segment spans residues Ile76 to Pro96. Over Arg97–Arg105 the chain is Cytoplasmic. A helical membrane pass occupies residues Met106 to His126. At Thr127–Lys132 the chain is on the extracellular side. The helical transmembrane segment at Val133–Ala153 threads the bilayer. The MtN3/slv 2 domain occupies Phe134–Lys219. Topologically, residues Ala154–Pro167 are cytoplasmic. The helical transmembrane segment at Phe168–Gly188 threads the bilayer. Over Lys189–Asp190 the chain is Extracellular. Residues Leu191–Tyr211 traverse the membrane as a helical segment. The Cytoplasmic portion of the chain corresponds to Cys212–Asp252.

It belongs to the SWEET sugar transporter family. As to quaternary structure, forms homooligomers and/or heterooligomers.

Its subcellular location is the cell membrane. Mediates both low-affinity uptake and efflux of sugar across the plasma membrane. This chain is Bidirectional sugar transporter SWEET3b (SWEET3B), found in Oryza sativa subsp. japonica (Rice).